The chain runs to 359 residues: Peptide chain release factor 1 (359 aa).

Residue Gln-232 is modified to N5-methylglutamine.

Belongs to the prokaryotic/mitochondrial release factor family. Methylated by PrmC. Methylation increases the termination efficiency of RF1.

The protein resides in the cytoplasm. In terms of biological role, peptide chain release factor 1 directs the termination of translation in response to the peptide chain termination codons UAG and UAA. The sequence is that of Peptide chain release factor 1 from Lawsonia intracellularis (strain PHE/MN1-00).